The primary structure comprises 141 residues: HTH-type transcriptional regulator LrpA (141 aa).

The 62-residue stretch at 2–63 folds into the HTH asnC-type domain; it reads VDERDKIILD…KINPKKLGYS (62 aa). Residues 21–40 constitute a DNA-binding region (H-T-H motif); that stretch reads FTEIAKILGISETAVRKRVK.

In terms of assembly, homooctamer; tetramer of dimers.

Functionally, DNA-binding protein that negatively regulates its own transcription. Interferes with RNA polymerase (RNAP) recruitment by inhibiting the association of RNAP with the TBP-TFB promoter complex. This chain is HTH-type transcriptional regulator LrpA (lrpA), found in Pyrococcus abyssi (strain GE5 / Orsay).